A 693-amino-acid polypeptide reads, in one-letter code: Elongation factor G (693 aa).

Residues 8 to 282 enclose the tr-type G domain; sequence AKTRNIGIMA…AVIDYLPSPL (275 aa). GTP-binding positions include 17-24, 81-85, and 135-138; these read AHVDAGKT, DTPGH, and NKMD.

This sequence belongs to the TRAFAC class translation factor GTPase superfamily. Classic translation factor GTPase family. EF-G/EF-2 subfamily.

It localises to the cytoplasm. In terms of biological role, catalyzes the GTP-dependent ribosomal translocation step during translation elongation. During this step, the ribosome changes from the pre-translocational (PRE) to the post-translocational (POST) state as the newly formed A-site-bound peptidyl-tRNA and P-site-bound deacylated tRNA move to the P and E sites, respectively. Catalyzes the coordinated movement of the two tRNA molecules, the mRNA and conformational changes in the ribosome. This is Elongation factor G from Streptococcus thermophilus (strain CNRZ 1066).